Here is a 238-residue protein sequence, read N- to C-terminus: Probable transcriptional regulatory protein YeeN (238 aa).

Belongs to the TACO1 family. YeeN subfamily.

The protein resides in the cytoplasm. This Salmonella typhimurium (strain LT2 / SGSC1412 / ATCC 700720) protein is Probable transcriptional regulatory protein YeeN.